A 329-amino-acid chain; its full sequence is MIRNSDYKNFVCCAVCNKIIPPAPFGKTFKRIHEYKPLKTRFYTHKDILDIGANILKKEEQFQEDILREHIAKAEAEVWAQANERQKQAVEKALEEANDRHKIEIQILKEEHQKDLQEVTAKTKTEMYQNMDDEMKREHLAAEQRMVHRIQRIMMECHREKVEAVEKARAEERHIAQEAIQAQKSKAVEEIVNTGVTVIKDEKTSVARLMREKEHEMSILYGIAQRQRQEEVQEVLQEAEKTHQATLGNMMDKLANTQGELLSIAKQLGIMTNWKDFLEEELQETRMAFQKYINYTFPKLSPGHADFILPERKKTPSNLVIKENKTTLD.

Coiled-coil stretches lie at residues 57-120 (KKEE…QEVT) and 225-251 (QRQRQEEVQEVLQEAEKTHQATLGNMM).

This is an uncharacterized protein from Homo sapiens (Human).